Here is a 340-residue protein sequence, read N- to C-terminus: L-threonine 3-dehydrogenase (340 aa).

Cysteine 38 contacts Zn(2+). Active-site charge relay system residues include threonine 40 and histidine 43. Positions 63, 64, 93, 96, 99, and 107 each coordinate Zn(2+). NAD(+) is bound by residues isoleucine 175, aspartate 195, arginine 200, 261–263 (LGI), and 285–286 (IY).

The protein belongs to the zinc-containing alcohol dehydrogenase family. As to quaternary structure, homotetramer. It depends on Zn(2+) as a cofactor.

It localises to the cytoplasm. The catalysed reaction is L-threonine + NAD(+) = (2S)-2-amino-3-oxobutanoate + NADH + H(+). It participates in amino-acid degradation; L-threonine degradation via oxydo-reductase pathway; glycine from L-threonine: step 1/2. Catalyzes the NAD(+)-dependent oxidation of L-threonine to 2-amino-3-ketobutyrate. The protein is L-threonine 3-dehydrogenase of Xanthomonas euvesicatoria pv. vesicatoria (strain 85-10) (Xanthomonas campestris pv. vesicatoria).